The following is a 591-amino-acid chain: V-type ATP synthase alpha chain (591 aa).

Position 242–249 (242–249 (GPFGAGKT)) interacts with ATP.

It belongs to the ATPase alpha/beta chains family.

The enzyme catalyses ATP + H2O + 4 H(+)(in) = ADP + phosphate + 5 H(+)(out). Functionally, produces ATP from ADP in the presence of a proton gradient across the membrane. The V-type alpha chain is a catalytic subunit. The protein is V-type ATP synthase alpha chain (atpA) of Chlamydia pneumoniae (Chlamydophila pneumoniae).